An 84-amino-acid polypeptide reads, in one-letter code: Extender of the chronological lifespan protein 2 (84 aa).

The protein belongs to the ecl1 family.

It is found in the nucleus. Its function is as follows. Involved in chronological cell aging. The polypeptide is Extender of the chronological lifespan protein 2 (ecl2) (Schizosaccharomyces pombe (strain 972 / ATCC 24843) (Fission yeast)).